The primary structure comprises 842 residues: Amyloid-beta A4 precursor protein-binding family A member 1 (842 aa).

3 disordered regions span residues 1–121 (MNHL…DESA), 238–349 (RLHH…EKRD), and 366–439 (KTRT…KESR). A Phosphoserine modification is found at Ser82. Basic and acidic residues-rich tracts occupy residues 106 to 115 (DGYEAERAQD) and 240 to 258 (HHYD…KEAE). 6 positions are modified to phosphoserine: Ser246, Ser250, Ser252, Ser267, Ser284, and Ser289. Thr309 bears the Phosphothreonine mark. Residues Ser317 and Ser372 each carry the phosphoserine modification. A Phosphothreonine modification is found at Thr375. A compositionally biased stretch (basic and acidic residues) spans 392-403 (PTRDCDDQRPVD). Over residues 404–421 (GDSPSPGSSSPLGAESSS) the composition is skewed to low complexity. Phosphoserine occurs at positions 406, 408, 413, and 573. Positions 460–648 (LIDGIIFAAN…LLNTQDMYND (189 aa)) constitute a PID domain. Positions 631-648 (LSQKEYSDLLNTQDMYND) are autoinhibitory helix linker. PDZ domains follow at residues 661 to 746 (DVFI…NIVR) and 752 to 828 (TVLI…MPAA).

As to quaternary structure, part of a multimeric complex containing STXBP1 and STX1A. Interacts with STXBP1. Component of the brain-specific heterotrimeric complex (LIN-10-LIN-2-LIN-7 complex) composed of at least APBA1, CASK, and LIN7, which associates with the motor protein KIF17 to transport vesicles along microtubules. Within the complex, interacts (via PDZ domain) with the motor protein KIF17; the interaction is direct and is required for association of KIF17 with the cargo that is to be transported. Binds to the cytoplasmic domain of amyloid protein (APP). Interacts (via PDZ 1 and 2 domains) with FSPB. Isoform 3 interacts (via its truncated PID domain) with active, GTP-bound RAB6A. Also interacts with GTP-bound RAB6B. In terms of tissue distribution, isoform 3 is expressed in brain.

The protein resides in the cytoplasm. Its subcellular location is the perinuclear region. The protein localises to the nucleus. It is found in the golgi apparatus. Functionally, putative function in synaptic vesicle exocytosis by binding to Munc18-1, an essential component of the synaptic vesicle exocytotic machinery. May modulate processing of the amyloid-beta precursor protein (APP) and hence formation of AAP-beta. Component of the LIN-10-LIN-2-LIN-7 complex, which associates with the motor protein KIF17 to transport vesicles containing N-methyl-D-aspartate (NMDA) receptor subunit NR2B along microtubules. The chain is Amyloid-beta A4 precursor protein-binding family A member 1 from Mus musculus (Mouse).